The sequence spans 187 residues: ATP synthase subunit b 2 (187 aa).

The chain crosses the membrane as a helical span at residues 39–61 (SQLVWLVLSFAALYLLMSRVALP).

This sequence belongs to the ATPase B chain family. In terms of assembly, F-type ATPases have 2 components, F(1) - the catalytic core - and F(0) - the membrane proton channel. F(1) has five subunits: alpha(3), beta(3), gamma(1), delta(1), epsilon(1). F(0) has three main subunits: a(1), b(2) and c(10-14). The alpha and beta chains form an alternating ring which encloses part of the gamma chain. F(1) is attached to F(0) by a central stalk formed by the gamma and epsilon chains, while a peripheral stalk is formed by the delta and b chains.

It localises to the cell inner membrane. F(1)F(0) ATP synthase produces ATP from ADP in the presence of a proton or sodium gradient. F-type ATPases consist of two structural domains, F(1) containing the extramembraneous catalytic core and F(0) containing the membrane proton channel, linked together by a central stalk and a peripheral stalk. During catalysis, ATP synthesis in the catalytic domain of F(1) is coupled via a rotary mechanism of the central stalk subunits to proton translocation. Its function is as follows. Component of the F(0) channel, it forms part of the peripheral stalk, linking F(1) to F(0). The polypeptide is ATP synthase subunit b 2 (Parvibaculum lavamentivorans (strain DS-1 / DSM 13023 / NCIMB 13966)).